The following is a 78-amino-acid chain: Large ribosomal subunit protein uL30 (78 aa).

Over residues 58 to 68 (DDTSPDAETGA) the composition is skewed to acidic residues. The disordered stretch occupies residues 58–78 (DDTSPDAETGADLERDGGNRS). Over residues 69 to 78 (DLERDGGNRS) the composition is skewed to basic and acidic residues.

This sequence belongs to the universal ribosomal protein uL30 family. As to quaternary structure, part of the 50S ribosomal subunit.

This chain is Large ribosomal subunit protein uL30, found in Roseiflexus sp. (strain RS-1).